The primary structure comprises 221 residues: Phosphoribosylformylglycinamidine synthase subunit PurQ (221 aa).

In terms of domain architecture, Glutamine amidotransferase type-1 spans 3–221; sequence AAVLVFPGSN…MFASLMQVMA (219 aa). C87 (nucleophile) is an active-site residue. Active-site residues include H195 and E197.

Part of the FGAM synthase complex composed of 1 PurL, 1 PurQ and 2 PurS subunits.

It localises to the cytoplasm. It catalyses the reaction N(2)-formyl-N(1)-(5-phospho-beta-D-ribosyl)glycinamide + L-glutamine + ATP + H2O = 2-formamido-N(1)-(5-O-phospho-beta-D-ribosyl)acetamidine + L-glutamate + ADP + phosphate + H(+). The enzyme catalyses L-glutamine + H2O = L-glutamate + NH4(+). It participates in purine metabolism; IMP biosynthesis via de novo pathway; 5-amino-1-(5-phospho-D-ribosyl)imidazole from N(2)-formyl-N(1)-(5-phospho-D-ribosyl)glycinamide: step 1/2. Part of the phosphoribosylformylglycinamidine synthase complex involved in the purines biosynthetic pathway. Catalyzes the ATP-dependent conversion of formylglycinamide ribonucleotide (FGAR) and glutamine to yield formylglycinamidine ribonucleotide (FGAM) and glutamate. The FGAM synthase complex is composed of three subunits. PurQ produces an ammonia molecule by converting glutamine to glutamate. PurL transfers the ammonia molecule to FGAR to form FGAM in an ATP-dependent manner. PurS interacts with PurQ and PurL and is thought to assist in the transfer of the ammonia molecule from PurQ to PurL. The polypeptide is Phosphoribosylformylglycinamidine synthase subunit PurQ (Zymomonas mobilis subsp. mobilis (strain ATCC 31821 / ZM4 / CP4)).